A 91-amino-acid chain; its full sequence is Bombyxin B-1 homolog (91 aa).

Positions 1–19 are cleaved as a signal peptide; the sequence is MKVSMFVVIVLCMVAASSA. 3 cysteine pairs are disulfide-bonded: Cys-27–Cys-78, Cys-39–Cys-91, and Cys-77–Cys-82. Positions 49–69 are cleaved as a propeptide — c peptide like; sequence SGAQYARYGWQSPESREGARG.

Belongs to the insulin family. In terms of assembly, heterodimer of a B chain and an A chain linked by two disulfide bonds.

Its subcellular location is the secreted. Brain peptide responsible for activation of prothoracic glands to produce ecdysone in insects. The chain is Bombyxin B-1 homolog (SBXB1) from Samia cynthia (Ailanthus silkmoth).